Consider the following 246-residue polypeptide: Hydroxyacylglutathione hydrolase (246 aa).

His58, His60, Asp62, His63, His117, Asp137, and His175 together coordinate Zn(2+).

Belongs to the metallo-beta-lactamase superfamily. Glyoxalase II family. In terms of assembly, monomer. The cofactor is Zn(2+).

The catalysed reaction is an S-(2-hydroxyacyl)glutathione + H2O = a 2-hydroxy carboxylate + glutathione + H(+). The protein operates within secondary metabolite metabolism; methylglyoxal degradation; (R)-lactate from methylglyoxal: step 2/2. Its function is as follows. Thiolesterase that catalyzes the hydrolysis of S-D-lactoyl-glutathione to form glutathione and D-lactic acid. In Prochlorococcus marinus (strain MIT 9312), this protein is Hydroxyacylglutathione hydrolase.